A 195-amino-acid polypeptide reads, in one-letter code: Small ribosomal subunit protein uS4 (195 aa).

Positions 109–183 constitute an S4 RNA-binding domain; sequence RRLQTQVFKL…VKRKNLKKNQ (75 aa). The tract at residues 165–195 is disordered; the sequence is PFGGGRPGRVKRKNLKKNQGGGGGAAEEEED.

It belongs to the universal ribosomal protein uS4 family. In terms of assembly, component of the small ribosomal subunit. Identified in a IGF2BP1-dependent mRNP granule complex containing untranslated mRNAs. Part of the small subunit (SSU) processome, composed of more than 70 proteins and the RNA chaperone small nucleolar RNA (snoRNA) U3.

It localises to the cytoplasm. Its subcellular location is the nucleus. The protein resides in the nucleolus. Component of the small ribosomal subunit. The ribosome is a large ribonucleoprotein complex responsible for the synthesis of proteins in the cell. Part of the small subunit (SSU) processome, first precursor of the small eukaryotic ribosomal subunit. During the assembly of the SSU processome in the nucleolus, many ribosome biogenesis factors, an RNA chaperone and ribosomal proteins associate with the nascent pre-rRNA and work in concert to generate RNA folding, modifications, rearrangements and cleavage as well as targeted degradation of pre-ribosomal RNA by the RNA exosome. In Drosophila melanogaster (Fruit fly), this protein is Small ribosomal subunit protein uS4.